We begin with the raw amino-acid sequence, 514 residues long: MKEYQIHLELDRSQQHNFLYPLLFREYIYTLAHDHGLNRSTIPLENGGYDNKSSSLSVKRLISRTYQRIHLSIYAKDSNPNQFIGHNNQFYSQMISEGFSVIVEIPFSLRLVAFLEGKEKEMAKSHNFQSIHSIFPFFENNFSHLHYVLDVLIPYPIRPEILVRAFRYWVKDASSLHLLRFFLHEYFNWNSLITPKKSNSIFSTSNPRFFLFLYNSHVYEYESIFFFLRNQSSHLRSTSSGLLFERISFYGKVEDLVQVFVNDFQDNLWLFKHPIMHYVRYQGKSVLASKDMPLLMNKWKYYLVNLWQWHFHVWSQPGRIHINHLYKDYINFLGYLSRGRLNTLVVRSQMLENAFLIDNAMKQFETTVPIIPLIGSLTMARFCNSLGHPISKPTWADSSDSYIIDRFMRICRKLSHYHSGSSKKKSLYRIKYILRVSCVKSLVRKHKSTVRVFLKRLGSEFLEEFFTEEEHVLSLIFPRALFTSRRLYRGRVWYLDIICINDFVNHDKFEIVPN.

It belongs to the intron maturase 2 family. MatK subfamily.

It localises to the plastid. The protein localises to the chloroplast. Its function is as follows. Usually encoded in the trnK tRNA gene intron. Probably assists in splicing its own and other chloroplast group II introns. The sequence is that of Maturase K from Acer palmatum (Japanese maple).